Here is a 138-residue protein sequence, read N- to C-terminus: Large ribosomal subunit protein uL16 (138 aa).

Positions 1–16 (MLIPRRVKHRKQHHPG) are enriched in basic residues. Positions 1–25 (MLIPRRVKHRKQHHPGRSGAATGGT) are disordered.

Belongs to the universal ribosomal protein uL16 family. Part of the 50S ribosomal subunit.

In terms of biological role, binds 23S rRNA and is also seen to make contacts with the A and possibly P site tRNAs. The polypeptide is Large ribosomal subunit protein uL16 (Pseudarthrobacter chlorophenolicus (strain ATCC 700700 / DSM 12829 / CIP 107037 / JCM 12360 / KCTC 9906 / NCIMB 13794 / A6) (Arthrobacter chlorophenolicus)).